The following is a 221-amino-acid chain: MQTKGGSRLMIANRISGNIISDTFSDGKLNVPIEFEWFEADKKRMRKVAADGTEFGVAVGATIADGDVLAETADKRYFARIRTAQLIEIPVHSMKEMGRLCFELGNRHLSLKVEDDRVLVPYDHPTMEYTKKIGFDPRVIEGGFDGFLIVKAHAGAGTIVPGTNKTTGDLAEEEQETERHEPHAHAIGEHHHEKSEYEVNGVLHRADGMHSHDHGQTWHMH.

Residues 160-194 are disordered; sequence VPGTNKTTGDLAEEEQETERHEPHAHAIGEHHHEK. The span at 177–194 shows a compositional bias: basic and acidic residues; the sequence is TERHEPHAHAIGEHHHEK.

It belongs to the UreE family.

The protein localises to the cytoplasm. In terms of biological role, involved in urease metallocenter assembly. Binds nickel. Probably functions as a nickel donor during metallocenter assembly. In Bifidobacterium longum subsp. infantis (strain ATCC 15697 / DSM 20088 / JCM 1222 / NCTC 11817 / S12), this protein is Urease accessory protein UreE.